A 455-amino-acid chain; its full sequence is Chromosomal replication initiator protein DnaA (455 aa).

A domain I, interacts with DnaA modulators region spans residues 1-77 (MASLNENQKF…GFEVFGRMID (77 aa)). The tract at residues 77–116 (DYELYANDELTELELHRLNNQSSIEEQPRSTAKPASPLVS) is domain II. Residues 117-333 (GLNEKYNFEN…GALNRVEFVA (217 aa)) form a domain III, AAA+ region region. G161, G163, K164, and T165 together coordinate ATP. Residues 334–455 (RANGIAVVDI…KDIDSIKRKF (122 aa)) form a domain IV, binds dsDNA region.

It belongs to the DnaA family. As to quaternary structure, oligomerizes as a right-handed, spiral filament on DNA at oriC.

The protein resides in the cytoplasm. Functionally, plays an essential role in the initiation and regulation of chromosomal replication. ATP-DnaA binds to the origin of replication (oriC) to initiate formation of the DNA replication initiation complex once per cell cycle. Binds the DnaA box (a 9 base pair repeat at the origin) and separates the double-stranded (ds)DNA. Forms a right-handed helical filament on oriC DNA; dsDNA binds to the exterior of the filament while single-stranded (ss)DNA is stabiized in the filament's interior. The ATP-DnaA-oriC complex binds and stabilizes one strand of the AT-rich DNA unwinding element (DUE), permitting loading of DNA polymerase. After initiation quickly degrades to an ADP-DnaA complex that is not apt for DNA replication. Binds acidic phospholipids. In Lactococcus lactis subsp. lactis (strain IL1403) (Streptococcus lactis), this protein is Chromosomal replication initiator protein DnaA.